The following is a 297-amino-acid chain: 3-mercaptopyruvate sulfurtransferase (297 aa).

Ala2 bears the N-acetylalanine mark. The 120-residue stretch at 25-144 (ASQPLKLLDA…WLSQNLPISS (120 aa)) folds into the Rhodanese 1 domain. Ser35 bears the Phosphoserine mark. At Lys40 the chain carries N6-acetyllysine; alternate. At Lys40 the chain carries N6-succinyllysine; alternate. Positions 145–160 (GKSPSEPAEFCAQLDP) are hinge. Residues Lys146 and Lys164 each carry the N6-succinyllysine modification. One can recognise a Rhodanese 2 domain in the interval 174–288 (DARRFQVVDA…WYMRAQPEHV (115 aa)). Substrate is bound at residue Arg188. Catalysis depends on Cys248, which acts as the Cysteine persulfide intermediate.

Monomer (active form). Homodimer; disulfide-linked (inactive form). The N-terminus is blocked. In terms of tissue distribution, expressed in liver, heart, kidney and brain. Localizes to tubular epithelium in the kidney, pericentral hepatocytes in the liver, cardiac cells in the heart and neuroglial cells in the brain. Also expressed in vascular endothelium of the thoracic aorta. Weak expression in lung and thymus.

It is found in the cytoplasm. The protein resides in the mitochondrion. It localises to the synapse. Its subcellular location is the synaptosome. The enzyme catalyses 2-oxo-3-sulfanylpropanoate + [thioredoxin]-dithiol = [thioredoxin]-disulfide + hydrogen sulfide + pyruvate + H(+). With respect to regulation, by oxidative stress, and thioredoxin. Under oxidative stress conditions, the catalytic cysteine site is converted to a sulfenate which inhibits the MPST enzyme activity. Reduced thioredoxin cleaves an intersubunit disulfide bond to turn on the redox switch and reactivate the enzyme. Inhibited by different oxidants, hydrogen peroxide and tetrathionate. Transfer of a sulfur ion to cyanide or to other thiol compounds. Also has weak rhodanese activity. Detoxifies cyanide and is required for thiosulfate biosynthesis. Acts as an antioxidant. In combination with cysteine aminotransferase (CAT), contributes to the catabolism of cysteine and is an important producer of hydrogen sulfide in the brain, retina and vascular endothelial cells. Hydrogen sulfide H(2)S is an important synaptic modulator, signaling molecule, smooth muscle contractor and neuroprotectant. Its production by the 3MST/CAT pathway is regulated by calcium ions. The chain is 3-mercaptopyruvate sulfurtransferase (Mpst) from Rattus norvegicus (Rat).